Consider the following 359-residue polypeptide: Peptide chain release factor 1 (359 aa).

At Gln236 the chain carries N5-methylglutamine.

The protein belongs to the prokaryotic/mitochondrial release factor family. Methylated by PrmC. Methylation increases the termination efficiency of RF1.

It is found in the cytoplasm. Peptide chain release factor 1 directs the termination of translation in response to the peptide chain termination codons UAG and UAA. The polypeptide is Peptide chain release factor 1 (Ureaplasma parvum serovar 3 (strain ATCC 27815 / 27 / NCTC 11736)).